The chain runs to 538 residues: Syncytin-1 (538 aa).

An N-terminal signal peptide occupies residues 1–20 (MALPYHIFLFTVLLPSFTLT). The Extracellular segment spans residues 31–443 (SSPYQEFLWR…NIGPWGLLSQ (413 aa)). A glycan (N-linked (GlcNAc...) asparagine) is linked at N169. The short motif at 186–189 (CWMC) is the CXXC element. 3 cysteine pairs are disulfide-bonded: C186-C189, C186-C405, and C397-C404. 5 N-linked (GlcNAc...) asparagine glycosylation sites follow: N208, N214, N234, N242, and N281. Positions 320–340 (ILPFVMGAGVLGALGTGIGSI) are fusion peptide. Positions 380–396 (LQNRRALDLLTAERGGT) are immunosuppression. Residues 397–405 (CLFLGEECC) carry the CX6CC motif. N-linked (GlcNAc...) asparagine glycosylation is present at N409. The chain crosses the membrane as a helical span at residues 444–464 (WMPWILPFLGPLAAIILLLLF). The tract at residues 465 to 484 (GPCIFNLLVNFVSSRIEAIK) is essential for the fusiogenic function. The Cytoplasmic segment spans residues 465-538 (GPCIFNLLVN…LLRPNSAGSS (74 aa)). A disordered region spans residues 494–538 (KTKNYRRSLDWPASPRSDVNDIKGIPPEEISTAQPLLRPNSAGSS).

It belongs to the gamma type-C retroviral envelope protein family. HERV class-I W env subfamily. As to quaternary structure, the mature envelope protein (Env) consists of a trimer of SU-TM heterodimers attached probably by a labile interchain disulfide bond. Interacts with the C-type lectin CD209/DC-SIGN. In terms of processing, specific enzymatic cleavages in vivo yield mature proteins. Envelope glycoproteins are synthesized as an inactive precursor that is heavily N-glycosylated and processed likely by furin in the Golgi to yield the mature SU and TM proteins. The cleavage site between SU and TM requires the minimal sequence [KR]-X-[KR]-R. The CXXC motif is highly conserved across a broad range of retroviral envelope proteins. It is thought to participate in the formation of a labile disulfide bond possibly with the CX6CC motif present in the transmembrane protein.

The protein localises to the cell membrane. The protein resides in the virion. Functionally, this endogenous retroviral envelope protein has retained its original fusogenic properties and participates in trophoblast fusion and the formation of a syncytium during placenta morphogenesis. May recognize and induce fusion through binding of SLC1A4 and SLC1A5. In terms of biological role, endogenous envelope proteins may have kept, lost or modified their original function during evolution. Retroviral envelope proteins mediate receptor recognition and membrane fusion during early infection. The surface protein (SU) mediates receptor recognition, while the transmembrane protein (TM) acts as a class I viral fusion protein. The protein may have at least 3 conformational states: pre-fusion native state, pre-hairpin intermediate state, and post-fusion hairpin state. During viral and target cell membrane fusion, the coiled coil regions (heptad repeats) assume a trimer-of-hairpins structure, positioning the fusion peptide in close proximity to the C-terminal region of the ectodomain. The formation of this structure appears to drive apposition and subsequent fusion of membranes. In Hylobates pileatus (Pileated gibbon), this protein is Syncytin-1 (ERVW-1).